Reading from the N-terminus, the 602-residue chain is Threonine--tRNA ligase (602 aa).

The segment at 208–499 (DHRKLGTELK…LTEHCAGEFP (292 aa)) is catalytic. Positions 300, 351, and 476 each coordinate Zn(2+).

Belongs to the class-II aminoacyl-tRNA synthetase family. Homodimer. Zn(2+) is required as a cofactor.

The protein resides in the cytoplasm. It catalyses the reaction tRNA(Thr) + L-threonine + ATP = L-threonyl-tRNA(Thr) + AMP + diphosphate + H(+). In terms of biological role, catalyzes the attachment of threonine to tRNA(Thr) in a two-step reaction: L-threonine is first activated by ATP to form Thr-AMP and then transferred to the acceptor end of tRNA(Thr). Also edits incorrectly charged L-seryl-tRNA(Thr). The chain is Threonine--tRNA ligase from Campylobacter jejuni subsp. jejuni serotype O:23/36 (strain 81-176).